The following is a 187-amino-acid chain: UPF0200 protein APE_1753.1 (187 aa).

Residue 13–20 (GLPGSGKS) coordinates ATP.

This sequence belongs to the UPF0200 family.

The protein is UPF0200 protein APE_1753.1 of Aeropyrum pernix (strain ATCC 700893 / DSM 11879 / JCM 9820 / NBRC 100138 / K1).